We begin with the raw amino-acid sequence, 260 residues long: Carbonic anhydrase 3 (260 aa).

Alanine 2 carries the N-acetylalanine modification. Positions 3-259 (KEWGYADHNG…IKGRIVKASF (257 aa)) constitute an Alpha-carbonic anhydrase domain. Phosphoserine occurs at positions 29, 43, 50, and 55. Residues 64-67 (KTCR) are involved in proton transfer. Threonine 73 is subject to Phosphothreonine. Residues histidine 94, histidine 96, and histidine 119 each contribute to the Zn(2+) site. Tyrosine 127 carries the post-translational modification Phosphotyrosine. Phosphothreonine is present on threonine 176. An S-glutathionyl cysteine mark is found at cysteine 182 and cysteine 187. 198–199 (TT) serves as a coordination point for substrate. Threonine 216 carries the phosphothreonine modification. A Phosphoserine modification is found at serine 219.

This sequence belongs to the alpha-carbonic anhydrase family. Zn(2+) serves as cofactor. In terms of processing, S-thiolated both by thiol-disulfide exchange with glutathione disulfide and by oxyradical-initiated S-thiolation with reduced glutathione. S-glutathionylated in hepatocytes under oxidative stress.

It is found in the cytoplasm. The catalysed reaction is hydrogencarbonate + H(+) = CO2 + H2O. With respect to regulation, inhibited by acetazolamide. Functionally, reversible hydration of carbon dioxide. The polypeptide is Carbonic anhydrase 3 (Sus scrofa (Pig)).